A 186-amino-acid polypeptide reads, in one-letter code: Elongation factor P (186 aa).

Belongs to the elongation factor P family.

Its subcellular location is the cytoplasm. Its pathway is protein biosynthesis; polypeptide chain elongation. In terms of biological role, involved in peptide bond synthesis. Stimulates efficient translation and peptide-bond synthesis on native or reconstituted 70S ribosomes in vitro. Probably functions indirectly by altering the affinity of the ribosome for aminoacyl-tRNA, thus increasing their reactivity as acceptors for peptidyl transferase. The sequence is that of Elongation factor P from Acidobacterium capsulatum (strain ATCC 51196 / DSM 11244 / BCRC 80197 / JCM 7670 / NBRC 15755 / NCIMB 13165 / 161).